Reading from the N-terminus, the 238-residue chain is C-type lectin domain family 4 member A (238 aa).

Over 1-48 (MASEITYAEVKFKNESNSLHTYSESPAAPREKPIRDLRKPGSPSLLLT) the chain is Cytoplasmic. The ITIM motif signature appears at 5 to 10 (ITYAEV). A helical; Signal-anchor for type II membrane protein membrane pass occupies residues 49-69 (SLMLLLLLLAITFLVAFIIYF). The Extracellular portion of the chain corresponds to 70 to 238 (QKYSQLLEEK…SVCQMKKINL (169 aa)). N91 carries N-linked (GlcNAc...) asparagine glycosylation. C107 and C118 form a disulfide bridge. Positions 126–233 (SSASWNKSEE…SLKQKSVCQM (108 aa)) constitute a C-type lectin domain. N-linked (GlcNAc...) asparagine glycosylation is found at N131 and N136. 2 cysteine pairs are disulfide-bonded: C137-C231 and C205-C223. V146, E152, E197, S199, and E203 together coordinate Ca(2+). Alpha-D-mannopyranose is bound by residues 197–199 (EPS) and E203. Residue 209–211 (IYR) coordinates N-acetyl-D-glucosamine. Residues N219 and D220 each contribute to the Ca(2+) site.

May interact with PTPN6 via its ITIM site. In terms of tissue distribution, expressed in splenic antigen-presenting cells including B-cells, monocytes/macrophages, and dendritic cells (at protein level). Expressed in spleen and lymph node and slightly increased with dendritic cell maturation.

The protein localises to the cell membrane. Functionally, may be involved in regulating immune reactivity. May play a role in modulating dendritic cells (DC) differentiation and/or maturation. May be involved in the inhibition of B-cell-receptor-mediated calcium mobilization and protein tyrosine phosphorylation. Its function is as follows. C-type lectin receptor that binds carbohydrates mannose and fucose but also weakly interacts with N-acetylglucosamine (GlcNAc) in a Ca(2+)-dependent manner. Involved in regulating immune reactivity. Once triggered by antigen, it is internalized by clathrin-dependent endocytosis and delivers its antigenic cargo into the antigen presentation pathway resulting in cross-priming of CD8(+) T cells. This cross-presentation and cross-priming are enhanced by TLR7 and TLR8 agonists with increased expansion of the CD8(+) T cells, high production of IFNG and TNF with reduced levels of IL4, IL5 and IL13. In plasmacytoid dendritic cells, inhibits TLR9-mediated IFNA and TNF production. May be involved via its ITIM motif (immunoreceptor tyrosine-based inhibitory motifs) in the inhibition of B-cell-receptor-mediated calcium mobilization and protein tyrosine phosphorylation. This Mus musculus (Mouse) protein is C-type lectin domain family 4 member A (Clec4a).